The primary structure comprises 350 residues: MSNITDPQMWDFDDLNFTGMPPTDEGYSPCRLETETLNKYVVIITYALVFLLSLLGNSLVMLVILYSRVGRSVTDVYLLNLALADLLFALTLPIWAASKVNGWIFGTFLCKVVSLLKEVNFYSGILLLACISVDRYLAIVHATRTLTQKRHLVKFVCLGCWGLSMNLSLPFFLFRQAYHPNNSSPVCYEVLGNDTAKWRMVLRILPHTFGFIVPLFVMLFCYGFTLRTLFKAHMGQKHRAMRVIFAVVLIFLLCWLPYNLVLLADTLMRTQVIQESCERRNNIGRALDATEILGFLHSCLNPIIYAFIGQNFRHGFLKILAMHGLVSKEFLARHRVTSYTSSSVNVSSNL.

The Extracellular portion of the chain corresponds to 1 to 39; it reads MSNITDPQMWDFDDLNFTGMPPTDEGYSPCRLETETLNK. 2 N-linked (GlcNAc...) asparagine glycosylation sites follow: Asn3 and Asn16. The helical transmembrane segment at 40–66 threads the bilayer; the sequence is YVVIITYALVFLLSLLGNSLVMLVILY. Topologically, residues 67 to 75 are cytoplasmic; sequence SRVGRSVTD. The chain crosses the membrane as a helical span at residues 76-96; that stretch reads VYLLNLALADLLFALTLPIWA. The Extracellular portion of the chain corresponds to 97–111; sequence ASKVNGWIFGTFLCK. The cysteines at positions 110 and 187 are disulfide-linked. A helical membrane pass occupies residues 112–133; that stretch reads VVSLLKEVNFYSGILLLACISV. Topologically, residues 134-154 are cytoplasmic; sequence DRYLAIVHATRTLTQKRHLVK. Residues 155–174 traverse the membrane as a helical segment; that stretch reads FVCLGCWGLSMNLSLPFFLF. Over 175–199 the chain is Extracellular; it reads RQAYHPNNSSPVCYEVLGNDTAKWR. The helical transmembrane segment at 200 to 220 threads the bilayer; sequence MVLRILPHTFGFIVPLFVMLF. At 221–242 the chain is on the cytoplasmic side; it reads CYGFTLRTLFKAHMGQKHRAMR. Residues 243–264 form a helical membrane-spanning segment; it reads VIFAVVLIFLLCWLPYNLVLLA. The Extracellular segment spans residues 265 to 285; that stretch reads DTLMRTQVIQESCERRNNIGR. A helical transmembrane segment spans residues 286-308; the sequence is ALDATEILGFLHSCLNPIIYAFI. Over 309–350 the chain is Cytoplasmic; it reads GQNFRHGFLKILAMHGLVSKEFLARHRVTSYTSSSVNVSSNL.

It belongs to the G-protein coupled receptor 1 family. In terms of assembly, interacts with IL8. Interacts with GNAI2.

It localises to the cell membrane. Its function is as follows. Receptor to interleukin-8, which is a powerful neutrophils chemotactic factor. Binding of IL-8 to the receptor causes activation of neutrophils. This response is mediated via a G-protein that activates a phosphatidylinositol-calcium second messenger system. The protein is C-X-C chemokine receptor type 1 (CXCR1) of Pan troglodytes (Chimpanzee).